Consider the following 275-residue polypeptide: Undecaprenyl-diphosphatase (275 aa).

Transmembrane regions (helical) follow at residues methionine 1–valine 21, isoleucine 41–alanine 61, leucine 95–phenylalanine 115, phenylalanine 118–threonine 138, alanine 192–valine 212, phenylalanine 223–isoleucine 243, and leucine 255–leucine 275.

The protein belongs to the UppP family.

Its subcellular location is the cell membrane. The catalysed reaction is di-trans,octa-cis-undecaprenyl diphosphate + H2O = di-trans,octa-cis-undecaprenyl phosphate + phosphate + H(+). Catalyzes the dephosphorylation of undecaprenyl diphosphate (UPP). Confers resistance to bacitracin. In Alkaliphilus metalliredigens (strain QYMF), this protein is Undecaprenyl-diphosphatase.